Here is a 397-residue protein sequence, read N- to C-terminus: 8-amino-7-oxononanoate synthase (397 aa).

Arginine 21 is a binding site for substrate. 110-111 provides a ligand contact to pyridoxal 5'-phosphate; it reads GY. Substrate is bound at residue histidine 135. Serine 181, histidine 209, and threonine 238 together coordinate pyridoxal 5'-phosphate. Lysine 241 is modified (N6-(pyridoxal phosphate)lysine). Threonine 355 is a substrate binding site.

Belongs to the class-II pyridoxal-phosphate-dependent aminotransferase family. BioF subfamily. Homodimer. It depends on pyridoxal 5'-phosphate as a cofactor.

The enzyme catalyses 6-carboxyhexanoyl-[ACP] + L-alanine + H(+) = (8S)-8-amino-7-oxononanoate + holo-[ACP] + CO2. The protein operates within cofactor biosynthesis; biotin biosynthesis. Its function is as follows. Catalyzes the decarboxylative condensation of pimeloyl-[acyl-carrier protein] and L-alanine to produce 8-amino-7-oxononanoate (AON), [acyl-carrier protein], and carbon dioxide. This chain is 8-amino-7-oxononanoate synthase, found in Saccharophagus degradans (strain 2-40 / ATCC 43961 / DSM 17024).